A 316-amino-acid polypeptide reads, in one-letter code: uncharacterized protein (316 aa).

The region spanning 1-56 (MATLSDVAKKANVSKMTVSRVINHPETVTDELKKLVHSAMKELNYIPNYAARALVQ) is the HTH lacI-type domain. A DNA-binding region (H-T-H motif) is located at residues 4-23 (LSDVAKKANVSKMTVSRVIN).

This is an uncharacterized protein from Bacillus subtilis (strain 168).